The primary structure comprises 516 residues: Cytochrome P450 monooxygenase lcsI (516 aa).

A helical transmembrane segment spans residues 20–42; sequence ICVAAGCAFALSLLYLYVRALYL. 5 N-linked (GlcNAc...) asparagine glycosylation sites follow: Asn-131, Asn-184, Asn-415, Asn-420, and Asn-442. Cys-456 lines the heme pocket.

It belongs to the cytochrome P450 family. The cofactor is heme.

The protein localises to the membrane. It functions in the pathway secondary metabolite biosynthesis. Its function is as follows. Cytochrome P450 monooxygenase; part of the gene cluster that mediates the biosynthesis of the lipopeptide antibiotics leucinostatins that show extensive biological activities, including antimalarial, antiviral, antibacterial, antifungal, and antitumor activities, as well as phytotoxic. Leucinostatin A contains nine amino acid residues, including the unusual amino acid 4-methyl-L-proline (MePro), 2-amino-6-hydroxy-4-methyl-8-oxodecanoic acid (AHyMeOA), 3-hydroxyleucine (HyLeu), alpha-aminoisobutyric acid (AIB), beta-Ala, a 4-methylhex-2-enoic acid at the N-terminus as well as a N1,N1-dimethylpropane-1,2-diamine (DPD) at the C-terminus. The biosynthesis of leucinostatins is probably initiated with the assembly of 4-methylhex-2-enoic acid by a reducing PKS. Two reducing polyketide synthases, lcsB and lcsC, have been identified in the cluster and it is not clear which is the one that assembles 4-methylhex-2-enoic acid since both contain KS, AT, DH, cMT, ER, KR and ACP domains. The polyketide residue might be transferred to the NRPS lcsA, mediated by two additional enzymes, the acyl-CoA ligase lcsD and the thioesterase lcsE. The linear polyketide carboxylic acid, which is released from PKS, is converted to a CoA thioester by lcsD, and then lcsE hydrolyzes the thiol bond and shuttles the polyketide intermediate to lcsA. The C domain of the first module catalyzed the condensation of 4-methylhex-2-enoic acid and MePro carried by domain A1, followed by successive condensations of nine amino acids to trigger the elongation of the linear peptide. A5 and A6 domains of lcsA are proposed to incorporate leucine, A2 AHyMeOA, and A3 incorporates HyLeu. A4, A7 and A8 incorporate AIB. The AHyMeOA in leucinostatin A activated by the A2 might be produced by the second PKS (lcsB or lcsC) present within the cluster. The MePro is probably produced via leucine cyclization and may originate from a separate pathway, independent of the cluster. Another nonproteinogenic amino acid, beta-Ala, could be produced by an aspartic acid decarboxylase also localized outside of the cluster. Two candidates are VFPBJ_01400 and VFPBJ_10476. The final peptide scaffold may be released by the NAD(P)H-dependent thioester reductase (TE) at the C-terminal region of lcsA. Transamination of the lcsA product by the transaminase lcsP may produce DPD at the C-terminus. Further hydroxylation steps performed alternatively by the cytochrome P450 monooxygenases lcsI, lcsK and lcsN then yield the non-methylated leucinostatins precursor. It is also possible that leucines can be hydroxylated prior to their incorporation into the peptide. Varying extents of methylation then lead to the formation of leucinostatins A and B. The chain is Cytochrome P450 monooxygenase lcsI from Purpureocillium lilacinum (Paecilomyces lilacinus).